Here is a 115-residue protein sequence, read N- to C-terminus: U3-lycotoxin-Ls1o (115 aa).

Residues 1-20 (MKFVLLFGVLLVTLFSYSSA) form the signal peptide. A propeptide spanning residues 21-44 (EMLDDFDQADEDELLSLIEKEEAR) is cleaved from the precursor. 4 disulfide bridges follow: Cys-48/Cys-63, Cys-55/Cys-72, Cys-62/Cys-87, and Cys-74/Cys-85.

Belongs to the neurotoxin 19 (CSTX) family. 01 subfamily. As to expression, expressed by the venom gland.

It is found in the secreted. This chain is U3-lycotoxin-Ls1o, found in Lycosa singoriensis (Wolf spider).